The primary structure comprises 257 residues: Undecaprenyl-diphosphatase (257 aa).

Transmembrane regions (helical) follow at residues 4–24 (LFKA…PISS), 51–71 (HVGT…NIFF), 78–98 (LFII…HDLI), 106–126 (LIIV…EKVG), 133–153 (ITLS…IPGV), 171–191 (AYAA…AAML), 207–227 (LFII…KFLL), and 235–255 (LNLF…LYFF).

It belongs to the UppP family.

The protein localises to the cell inner membrane. The enzyme catalyses di-trans,octa-cis-undecaprenyl diphosphate + H2O = di-trans,octa-cis-undecaprenyl phosphate + phosphate + H(+). In terms of biological role, catalyzes the dephosphorylation of undecaprenyl diphosphate (UPP). Confers resistance to bacitracin. The polypeptide is Undecaprenyl-diphosphatase (Thermodesulfovibrio yellowstonii (strain ATCC 51303 / DSM 11347 / YP87)).